A 493-amino-acid polypeptide reads, in one-letter code: Amidophosphoribosyltransferase (493 aa).

Residues 1 to 26 (MIPTQPLTADLDCDLGLERPDRPEEA) constitute a propeptide that is removed on maturation. The Nucleophile role is filled by Cys-27. The region spanning 27-252 (CGVFALYAPG…PGEMVRITDA (226 aa)) is the Glutamine amidotransferase type-2 domain. Cys-268 provides a ligand contact to [4Fe-4S] cluster. Residues Ser-315, Asp-377, and Asp-378 each coordinate Mg(2+). Positions 414, 465, and 468 each coordinate [4Fe-4S] cluster.

This sequence in the C-terminal section; belongs to the purine/pyrimidine phosphoribosyltransferase family. The cofactor is Mg(2+). [4Fe-4S] cluster is required as a cofactor.

The enzyme catalyses 5-phospho-beta-D-ribosylamine + L-glutamate + diphosphate = 5-phospho-alpha-D-ribose 1-diphosphate + L-glutamine + H2O. The protein operates within purine metabolism; IMP biosynthesis via de novo pathway; N(1)-(5-phospho-D-ribosyl)glycinamide from 5-phospho-alpha-D-ribose 1-diphosphate: step 1/2. Catalyzes the formation of phosphoribosylamine from phosphoribosylpyrophosphate (PRPP) and glutamine. This Synechococcus elongatus (strain ATCC 33912 / PCC 7942 / FACHB-805) (Anacystis nidulans R2) protein is Amidophosphoribosyltransferase.